A 950-amino-acid polypeptide reads, in one-letter code: Glycine dehydrogenase (decarboxylating) (950 aa).

Residue lysine 698 is modified to N6-(pyridoxal phosphate)lysine.

The protein belongs to the GcvP family. In terms of assembly, the glycine cleavage system is composed of four proteins: P, T, L and H. Pyridoxal 5'-phosphate is required as a cofactor.

It catalyses the reaction N(6)-[(R)-lipoyl]-L-lysyl-[glycine-cleavage complex H protein] + glycine + H(+) = N(6)-[(R)-S(8)-aminomethyldihydrolipoyl]-L-lysyl-[glycine-cleavage complex H protein] + CO2. The glycine cleavage system catalyzes the degradation of glycine. The P protein binds the alpha-amino group of glycine through its pyridoxal phosphate cofactor; CO(2) is released and the remaining methylamine moiety is then transferred to the lipoamide cofactor of the H protein. The chain is Glycine dehydrogenase (decarboxylating) from Neisseria gonorrhoeae (strain NCCP11945).